The following is a 969-amino-acid chain: MEAGAMGGSSFLSFSSGPSAETSPSSLSPPTSSSPSPSPQLVSDSVESLHAKRPLAQSSRSSSRTAASTCFCWQGEGQENEAAPTISQEERRGGSMTAASAGHLETAREEAARCLGCSYTGEERRGASSATSVLSLGGERGRPPSRSSSLWTFSGLLSPLAFRSRRCCPQFSSSSSPLSPLPHPRGAPASACGSAVITDRAGRPASPLSFSRLASPVSDPSGVCPPRVVAARVWRLLSSVLFSLVNCARLFPRRLSRRPDPLRKPRAQVWSASSRSLQALLLATVALFAACSSLHGSSLLGAQAASPTPPFLSLSSSPRSLASDSAKKGSNAPEQSREQRGEREGERQRPDKGEENGETEETFPAASGVVPAPGLKVADLPRTGPPVDLLGLPIRKKVFRARLYGSMFSYAYYFLDILVGTPPQRASVILDTGSSLLAFPCAGCSECGQHLDPAMDTSRSATGEWIDCKEQERCFGSCSGGTPLGGLGGGGVSSMRRCMYTQTYSEGSAIRGIYFSDVVALGEVEQKNPPVRYDFVGCHTQETNLFVTQKAAGIFGISFPKGHRQPTLLDVMFGHTNLVDKKMFSVCISEDGGLLTVGGYEPTLLVAPPESESTPATEALRPVAGESASRRISEKTSPHHAALLTWTSIISHSTYRVPLSGMEVEGLVLGSGVDDFGNTMVDSGTDLSSIFPPIKVSFGDEKNSQVWWWPEGYLYRRTGGYFCDGLDDNKVSASVLGLSFFKNKQVLFDREQDRVGFAAAKCPSFFLDQRPRGPDSGDGPKGRPTAPFTVPPLRVPVPMDGGGVPGDAKQPEGLPLSPQQLWVAAALVVVAILIAVTVILLHTIKRPSRSSAVVPAPSAPRLPFAQNSKSAGRFARGLGHGALGVGNPVYVQRTQRYREVQEAQPHTADAYYDVEEDRFTGEDDGDFFGDDSVPSAEEQETAPSLSLREESSPFSASQSTLLDLPLGGE.

An N-terminal signal peptide occupies residues 1–22; sequence MEAGAMGGSSFLSFSSGPSAET. The span at 1-45 shows a compositional bias: low complexity; it reads MEAGAMGGSSFLSFSSGPSAETSPSSLSPPTSSSPSPSPQLVSDS. Disordered regions lie at residues 1–65, 79–104, 128–149, 173–193, and 311–382; these read MEAG…SSRT, ENEA…AGHL, SSAT…RSSS, SSSS…SACG, and FLSL…DLPR. Topologically, residues 23-820 are lumenal; sequence SPSSLSPPTS…PEGLPLSPQQ (798 aa). Residues 311–324 are compositionally biased toward low complexity; sequence FLSLSSSPRSLASD. Residues 335–355 show a composition bias toward basic and acidic residues; that stretch reads QSREQRGEREGERQRPDKGEE. In terms of domain architecture, Peptidase A1 spans 413–758; sequence YFLDILVGTP…DREQDRVGFA (346 aa). Asp-431 is an active-site residue. Residues 608 to 635 form a disordered region; it reads PPESESTPATEALRPVAGESASRRISEK. Asp-682 is a catalytic residue. The segment at 768–794 is disordered; sequence DQRPRGPDSGDGPKGRPTAPFTVPPLR. A compositionally biased stretch (basic and acidic residues) spans 769-781; it reads QRPRGPDSGDGPK. A helical membrane pass occupies residues 821-841; it reads LWVAAALVVVAILIAVTVILL. Residues 842–969 lie on the Cytoplasmic side of the membrane; the sequence is HTIKRPSRSS…TLLDLPLGGE (128 aa). The segment at 922 to 969 is disordered; sequence EDDGDFFGDDSVPSAEEQETAPSLSLREESSPFSASQSTLLDLPLGGE. The span at 952–961 shows a compositional bias: polar residues; that stretch reads SPFSASQSTL.

The protein belongs to the peptidase A1 family. Post-translationally, may be auto-cleaved to produce a 55 kDa form.

Its subcellular location is the golgi apparatus membrane. In tachyzoites, plays an essential role in the export of several dense granule proteins into the host cell by cleaving the localization motif RRLxx (termed Toxoplasma export element (TEXEL)) located downstream of the N-terminal secretory signal sequence. However, can also regulate the export of proteins that lack the TEXEL motif, such as GRA24. Requires Arg at P3 and P2, and Leu at P1 in the substrate TEXEL motif and, specifically, cleaves after Leu. Cleaves GRA16; proteolytic cleavage is essential for the correct trafficking of GRA16 from the parasite into the infected host nucleus. Cleaves GRA19 and GRA20. Cleaves MYR1. Cleaves LCAT, GRA44, GRA46, GRA46, ROP35/WNG1 and ROP34/WNG2. By regulating the export of dense granule proteins into the host cell, regulates multiple processes during tachyzoite infection of host cells, including recruitment of host mitochondria to the parasitophorous vacuole (PV), formation of the nanotubular network (NTN) or intravacuolar network (IVN) which are membranous tubules that bud from the PV membrane into the vacuolar lumen and, up-regulation of host cell genes to facilitate the parasite infection and modulate the host innate immune response. At the bradyzoite stage, also involved in the formation of the cyst wall. The protein is Aspartic protease 5 of Toxoplasma gondii.